A 425-amino-acid chain; its full sequence is tRNA(Met) cytidine acetate ligase (425 aa).

ATP is bound by residues 7–20 (IVEYNPFHNGHLYH), glycine 102, asparagine 165, and 190–191 (RI).

Belongs to the TmcAL family.

It is found in the cytoplasm. It carries out the reaction cytidine(34) in elongator tRNA(Met) + acetate + ATP = N(4)-acetylcytidine(34) in elongator tRNA(Met) + AMP + diphosphate. Functionally, catalyzes the formation of N(4)-acetylcytidine (ac(4)C) at the wobble position of elongator tRNA(Met), using acetate and ATP as substrates. First activates an acetate ion to form acetyladenylate (Ac-AMP) and then transfers the acetyl group to tRNA to form ac(4)C34. This chain is tRNA(Met) cytidine acetate ligase, found in Thermosipho melanesiensis (strain DSM 12029 / CIP 104789 / BI429).